Reading from the N-terminus, the 550-residue chain is Arginine--tRNA ligase (550 aa).

A 'HIGH' region motif is present at residues 124-134 (ANPTGPLHVGH).

The protein belongs to the class-I aminoacyl-tRNA synthetase family. In terms of assembly, monomer.

It is found in the cytoplasm. It carries out the reaction tRNA(Arg) + L-arginine + ATP = L-arginyl-tRNA(Arg) + AMP + diphosphate. In Desulfovibrio desulfuricans (strain ATCC 27774 / DSM 6949 / MB), this protein is Arginine--tRNA ligase.